A 247-amino-acid chain; its full sequence is 5'-nucleotidase SurE (247 aa).

A divalent metal cation is bound by residues Asp-8, Asp-9, Ser-39, and Asn-91.

This sequence belongs to the SurE nucleotidase family. Requires a divalent metal cation as cofactor.

The protein resides in the cytoplasm. It carries out the reaction a ribonucleoside 5'-phosphate + H2O = a ribonucleoside + phosphate. Nucleotidase that shows phosphatase activity on nucleoside 5'-monophosphates. The protein is 5'-nucleotidase SurE of Ruthia magnifica subsp. Calyptogena magnifica.